A 427-amino-acid polypeptide reads, in one-letter code: MLDIKYVRENPDAVKKMLEMRLLASESKKIDELIRYDSERKAKVTESDTLKAMRNSVTQEIAKIKREKTGSADELIAEMKIVSDRISEIDAELREIETKQEELLLAVPNILHESVPEGKSAADNVVYKEVMDCKREFDFKPKDHIELGKSLGMLDFERGAKIAGAGFPLYIGKGASLERALINFMLDLHLEKHGYKEVFPPFFVNRDSLRGTGQWPKFADQVYYMNDDDIYAIPTAEVPVTNMHRDEMLQSKELPIKYAAYSACFRREAGSYGKDTKGFLRVHQFNKVEMVKFVLPETSYDELEALLGDAEDVLKALEIPYRVLLLCSGDISANAAKCYDIEVWSPAEEKFLEASSCSNFEDYQARRAQIRFRRQPKAKPEFVHTLNGSGLATSRLMVSLMENYQTPDGKIQVPKVLQKYMGCEVIG.

235 to 237 (TAE) is a binding site for L-serine. Residues 266–268 (RRE) and V282 contribute to the ATP site. Position 289 (E289) interacts with L-serine. 353–356 (EASS) serves as a coordination point for ATP. An L-serine-binding site is contributed by S389.

The protein belongs to the class-II aminoacyl-tRNA synthetase family. Type-1 seryl-tRNA synthetase subfamily. As to quaternary structure, homodimer. The tRNA molecule binds across the dimer.

It is found in the cytoplasm. The catalysed reaction is tRNA(Ser) + L-serine + ATP = L-seryl-tRNA(Ser) + AMP + diphosphate + H(+). It carries out the reaction tRNA(Sec) + L-serine + ATP = L-seryl-tRNA(Sec) + AMP + diphosphate + H(+). It participates in aminoacyl-tRNA biosynthesis; selenocysteinyl-tRNA(Sec) biosynthesis; L-seryl-tRNA(Sec) from L-serine and tRNA(Sec): step 1/1. In terms of biological role, catalyzes the attachment of serine to tRNA(Ser). Is also able to aminoacylate tRNA(Sec) with serine, to form the misacylated tRNA L-seryl-tRNA(Sec), which will be further converted into selenocysteinyl-tRNA(Sec). The polypeptide is Serine--tRNA ligase (Chloroherpeton thalassium (strain ATCC 35110 / GB-78)).